The primary structure comprises 175 residues: Deoxyuridine 5'-triphosphate nucleotidohydrolase (175 aa).

Residues 67 to 69 (RSG), Asn80, 84 to 86 (TVD), and Lys94 each bind substrate. The disordered stretch occupies residues 138–175 (RAEGGFGSTGGHAAVGADTNGQQGGNRYASVVSDRKGQ).

It belongs to the dUTPase family. Mg(2+) is required as a cofactor.

The catalysed reaction is dUTP + H2O = dUMP + diphosphate + H(+). Its pathway is pyrimidine metabolism; dUMP biosynthesis; dUMP from dCTP (dUTP route): step 2/2. Functionally, this enzyme is involved in nucleotide metabolism: it produces dUMP, the immediate precursor of thymidine nucleotides and it decreases the intracellular concentration of dUTP so that uracil cannot be incorporated into DNA. The chain is Deoxyuridine 5'-triphosphate nucleotidohydrolase from Streptomyces avermitilis (strain ATCC 31267 / DSM 46492 / JCM 5070 / NBRC 14893 / NCIMB 12804 / NRRL 8165 / MA-4680).